The sequence spans 76 residues: Large ribosomal subunit protein bL31 (76 aa).

Residues Cys-16, Cys-18, Cys-38, and Cys-41 each coordinate Zn(2+).

Belongs to the bacterial ribosomal protein bL31 family. Type A subfamily. In terms of assembly, part of the 50S ribosomal subunit. The cofactor is Zn(2+).

In terms of biological role, binds the 23S rRNA. The protein is Large ribosomal subunit protein bL31 of Nocardia farcinica (strain IFM 10152).